We begin with the raw amino-acid sequence, 41 residues long: Large ribosomal subunit protein bL36 (41 aa).

This sequence belongs to the bacterial ribosomal protein bL36 family.

The polypeptide is Large ribosomal subunit protein bL36 (Xanthomonas axonopodis pv. citri (strain 306)).